A 209-amino-acid chain; its full sequence is Uracil phosphoribosyltransferase (209 aa).

5-phospho-alpha-D-ribose 1-diphosphate-binding positions include Arg79, Arg104, and 131-139 (DPMLATGGS). Uracil is bound by residues Ile194 and 199–201 (GDA). Asp200 serves as a coordination point for 5-phospho-alpha-D-ribose 1-diphosphate.

The protein belongs to the UPRTase family. Requires Mg(2+) as cofactor.

It catalyses the reaction UMP + diphosphate = 5-phospho-alpha-D-ribose 1-diphosphate + uracil. The protein operates within pyrimidine metabolism; UMP biosynthesis via salvage pathway; UMP from uracil: step 1/1. With respect to regulation, allosterically activated by GTP. Its function is as follows. Catalyzes the conversion of uracil and 5-phospho-alpha-D-ribose 1-diphosphate (PRPP) to UMP and diphosphate. This Clostridioides difficile (strain 630) (Peptoclostridium difficile) protein is Uracil phosphoribosyltransferase.